We begin with the raw amino-acid sequence, 398 residues long: Probable L-tyrosine/L-aspartate decarboxylase (398 aa).

Lys242 carries the post-translational modification N6-(pyridoxal phosphate)lysine.

It belongs to the group II decarboxylase family. MfnA subfamily. Pyridoxal 5'-phosphate is required as a cofactor.

The enzyme catalyses L-tyrosine + H(+) = tyramine + CO2. It catalyses the reaction L-aspartate + H(+) = beta-alanine + CO2. It participates in cofactor biosynthesis; methanofuran biosynthesis. It functions in the pathway cofactor biosynthesis; coenzyme A biosynthesis. Functionally, catalyzes the decarboxylation of L-tyrosine to produce tyramine for methanofuran biosynthesis. Can also catalyze the decarboxylation of L-aspartate to produce beta-alanine for coenzyme A (CoA) biosynthesis. The chain is Probable L-tyrosine/L-aspartate decarboxylase from Methanosarcina mazei (strain ATCC BAA-159 / DSM 3647 / Goe1 / Go1 / JCM 11833 / OCM 88) (Methanosarcina frisia).